The following is a 453-amino-acid chain: Homogentisate 1,2-dioxygenase (453 aa).

Positions 1-12 (MLEKAERQRKAA) are enriched in basic and acidic residues. Positions 1–43 (MLEKAERQRKAAPDQQRSAGYMPGFGNDFETESLPGSLPQGQN) are disordered. His-306 (proton acceptor) is an active-site residue. 2 residues coordinate Fe cation: His-349 and Glu-355. The homogentisate site is built by Tyr-364 and His-385. His-385 is a binding site for Fe cation.

This sequence belongs to the homogentisate dioxygenase family. Hexamer; dimer of trimers. It depends on Fe cation as a cofactor.

It carries out the reaction homogentisate + O2 = 4-maleylacetoacetate + H(+). It functions in the pathway amino-acid degradation; L-phenylalanine degradation; acetoacetate and fumarate from L-phenylalanine: step 4/6. In terms of biological role, involved in the catabolism of homogentisate (2,5-dihydroxyphenylacetate or 2,5-OH-PhAc), a central intermediate in the degradation of phenylalanine and tyrosine. Catalyzes the oxidative ring cleavage of the aromatic ring of homogentisate to yield maleylacetoacetate. The chain is Homogentisate 1,2-dioxygenase from Sinorhizobium medicae (strain WSM419) (Ensifer medicae).